The sequence spans 165 residues: Chorismate pyruvate-lyase (165 aa).

Substrate-binding residues include M35, R77, L115, and E156.

It belongs to the UbiC family. As to quaternary structure, monomer.

It localises to the cytoplasm. It catalyses the reaction chorismate = 4-hydroxybenzoate + pyruvate. It participates in cofactor biosynthesis; ubiquinone biosynthesis. Functionally, removes the pyruvyl group from chorismate, with concomitant aromatization of the ring, to provide 4-hydroxybenzoate (4HB) for the ubiquinone pathway. This is Chorismate pyruvate-lyase from Salmonella enteritidis PT4 (strain P125109).